Consider the following 206-residue polypeptide: Large ribosomal subunit protein uL4 (206 aa).

The protein belongs to the universal ribosomal protein uL4 family. Part of the 50S ribosomal subunit.

In terms of biological role, one of the primary rRNA binding proteins, this protein initially binds near the 5'-end of the 23S rRNA. It is important during the early stages of 50S assembly. It makes multiple contacts with different domains of the 23S rRNA in the assembled 50S subunit and ribosome. Functionally, forms part of the polypeptide exit tunnel. In Bradyrhizobium diazoefficiens (strain JCM 10833 / BCRC 13528 / IAM 13628 / NBRC 14792 / USDA 110), this protein is Large ribosomal subunit protein uL4.